A 381-amino-acid polypeptide reads, in one-letter code: Creatine kinase M-type (381 aa).

In terms of domain architecture, Phosphagen kinase N-terminal spans 11–98; the sequence is KLNYKSEEEY…FDPIIQDRHG (88 aa). The region spanning 125 to 367 is the Phosphagen kinase C-terminal domain; the sequence is YVLSSRVRTG…KLMVEMEKKL (243 aa). Residue 128–132 participates in ATP binding; the sequence is SSRVR. The residue at position 164 (Ser164) is a Phosphoserine. Thr166 carries the post-translational modification Phosphothreonine. Position 178 is a phosphoserine (Ser178). Position 180 is a phosphothreonine (Thr180). His191 contributes to the ATP binding site. Ser199 is subject to Phosphoserine. Arg236 and Arg292 together coordinate ATP. Phosphothreonine is present on residues Thr313 and Thr322. 320–325 is a binding site for ATP; the sequence is RGTGGV. At Ser372 the chain carries Phosphoserine.

The protein belongs to the ATP:guanido phosphotransferase family. As to quaternary structure, dimer of identical or non-identical chains, which can be either B (brain type) or M (muscle type). With MM being the major form in skeletal muscle and myocardium, MB existing in myocardium, and BB existing in many tissues, especially brain.

It catalyses the reaction creatine + ATP = N-phosphocreatine + ADP + H(+). Reversibly catalyzes the transfer of phosphate between ATP and various phosphogens (e.g. creatine phosphate). Creatine kinase isoenzymes play a central role in energy transduction in tissues with large, fluctuating energy demands, such as skeletal muscle, heart, brain and spermatozoa. The sequence is that of Creatine kinase M-type (CKM) from Oryctolagus cuniculus (Rabbit).